A 362-amino-acid chain; its full sequence is Vignain (362 aa).

The signal sequence occupies residues 1–20 (MAMKKLLWVVLSLSLVLGVA). A propeptide spans 21–126 (NSFDFHEKDL…SGTFMYEKVG (106 aa)) (activation peptide). Cystine bridges form between Cys149–Cys191, Cys183–Cys224, and Cys282–Cys334. Cys152 is an active-site residue. Residues His288 and Asn309 contribute to the active site. Asn326 and Asn346 each carry an N-linked (GlcNAc...) asparagine glycan. Residues 353–362 (GSLSSPKDEL) constitute a propeptide, removed in mature form. Residues 359-362 (KDEL) carry the Prevents secretion from ER motif.

Belongs to the peptidase C1 family. Post-translationally, the mature protein is not glycosylated. The precursor stored in the endoplasmic reticulum lumen is processed during the transport to proteins bodies to two dominant mature forms that differ by a single amino acid residue at the N-terminus.

The protein localises to the endoplasmic reticulum lumen. It is found in the vacuole. It localises to the aleurone grain. Its function is as follows. Thought to be involved in the hydrolysis of stored seed proteins. In vitro, catalyzes the hydrolysis of proteins, such as azocasein. Shows a preferential cleavage for Asn-|-Xaa in small molecule substrates such as Boc-Asn-|-OPHNO(2). This chain is Vignain, found in Vigna mungo (Black gram).